Here is an 870-residue protein sequence, read N- to C-terminus: Ubiquitin-protein ligase E3A (870 aa).

Residue Ser-8 is modified to Phosphoserine. A C4-type; atypical zinc finger spans residues Cys-42–Cys-81. Residues Glu-171–Asp-180 show a composition bias toward basic and acidic residues. A disordered region spans residues Glu-171–Gly-223. The segment covering Arg-208–Gln-220 has biased composition (polar residues). Residue Ser-213 is modified to Phosphoserine. Residues Asn-542–Leu-870 enclose the HECT domain. Residue Tyr-654 is modified to Phosphotyrosine; by ABL1. The active-site Glycyl thioester intermediate is the Cys-838.

The active form is probably a homotrimer. Binds UBQLN1 and UBQLN2. Interacts with the 26S proteasome. Interacts with BPY2. Interacts with HIF1AN, MAPK6 and NEURL4; interaction with MAPK6 may be mediated by NEURL4. Interacts with the proteasomal subunit PSMD4. Interacts with BMAL1. Interacts with ARC. Interacts with ESR1 and WBP2. Post-translationally, phosphorylation at Tyr-654 by ABL1 impairs E3 ligase activity. In terms of tissue distribution, widely expressed. Most abundant in brain, heart and thymus.

The protein localises to the cytoplasm. Its subcellular location is the nucleus. The catalysed reaction is S-ubiquitinyl-[E2 ubiquitin-conjugating enzyme]-L-cysteine + [acceptor protein]-L-lysine = [E2 ubiquitin-conjugating enzyme]-L-cysteine + N(6)-ubiquitinyl-[acceptor protein]-L-lysine.. It functions in the pathway protein modification; protein ubiquitination. Its function is as follows. E3 ubiquitin-protein ligase which accepts ubiquitin from an E2 ubiquitin-conjugating enzyme in the form of a thioester and transfers it to its substrates. Several substrates have been identified including the BMAL1, ARC, LAMTOR1, RAD23A and RAD23B, MCM7 (which is involved in DNA replication), annexin A1, the PML tumor suppressor, and the cell cycle regulator CDKN1B. Additionally, may function as a cellular quality control ubiquitin ligase by helping the degradation of the cytoplasmic misfolded proteins. Finally, UBE3A also promotes its own degradation in vivo. Plays an important role in the regulation of the circadian clock: involved in the ubiquitination of the core clock component BMAL1, leading to its proteasomal degradation. Acts as a regulator of synaptic development by mediating ubiquitination and degradation of ARC. Required for synaptic remodeling in neurons by mediating ubiquitination and degradation of LAMTOR1, thereby limiting mTORC1 signaling and activity-dependent synaptic remodeling. Synergizes with WBP2 in enhancing PGR activity. The protein is Ubiquitin-protein ligase E3A of Mus musculus (Mouse).